A 455-amino-acid chain; its full sequence is MKQTTIAAIATAIVPQQGSIGIVRLSGVEAVSIAKQLFQTPGKQQWESHRVLYGYIQQPLTQQIIDEGLLLLMLAPRSYTREDVVEFHCHGGMIAVQQVLEACLQAGAELAQPGEFTLRAFLNGRLDLTQAEGVADLVGARSPQAAQAALAGVQGKLASPIRELRQRCLDTLAEVEARVDFEDDLPPLDEAGVQAELQDIHATLQAILATADQGELLRNGLTVAIIGRPNVGKSSLLNAWCRCDRAIVTDLPGTTRDVVESQLVVGGIPIQVLDTAGIRETEDQVEQIGVTRSHQAAQSADLVLLTIDASVGWTSDDQQLYQAFQDLPLILIVNKVDLVPQEQVVYPEAIAQVVSTIAAQNQGISELETAILETVQTQSLKAANLDWAINQRQAAALQKAQAALEHVQGAIADQLPLDFWTIDLRGAIQALGEITGEDITESVLDRIFSRFCIGK.

The (6S)-5-formyl-5,6,7,8-tetrahydrofolate site is built by Arg24, Glu86, and Arg125. One can recognise a TrmE-type G domain in the interval 220 to 376; the sequence is GLTVAIIGRP…LETAILETVQ (157 aa). K(+) is bound at residue Asn230. GTP-binding positions include 230 to 235, 249 to 255, and 274 to 277; these read NVGKSS, TDLPGTT, and DTAG. Residue Ser234 coordinates Mg(2+). K(+) contacts are provided by Thr249, Leu251, and Thr254. Thr255 contacts Mg(2+). Residue Lys455 coordinates (6S)-5-formyl-5,6,7,8-tetrahydrofolate.

The protein belongs to the TRAFAC class TrmE-Era-EngA-EngB-Septin-like GTPase superfamily. TrmE GTPase family. As to quaternary structure, homodimer. Heterotetramer of two MnmE and two MnmG subunits. The cofactor is K(+).

The protein localises to the cytoplasm. Functionally, exhibits a very high intrinsic GTPase hydrolysis rate. Involved in the addition of a carboxymethylaminomethyl (cmnm) group at the wobble position (U34) of certain tRNAs, forming tRNA-cmnm(5)s(2)U34. The chain is tRNA modification GTPase MnmE from Acaryochloris marina (strain MBIC 11017).